A 59-amino-acid chain; its full sequence is Aedesin (59 aa).

The N-terminal stretch at 1–23 (MNFTKLFAIVLLAALVLLGQTEA) is a signal peptide.

The protein belongs to the cecropin family. Salivary gland (at protein level).

The protein resides in the secreted. Its function is as follows. Antimicrobial peptide. Exhibits antibacterial activity against Gram-negative bacteria, such as Escherichia coli, Pseudomonas aeruginosa, Acinetobacter baumannii and Klebsiella pneumoniae. Shows no antibacterial effects against Gram-positive bacteria, such as Staphylococcus aureus, Enterococcus faecalis and Enterococcus faecium. Exhibits antiviral activity against all four dengue virus serotypes and chikungunya virus. Exhibits leishmanicidal activity. Partially neutralizes lipopolysaccharides (LPS). Exhibits anti-inflammatory properties: inhibits LPS-induced iNOS/NOS2 transcription, nitric oxide (NO) and pro-inflammatory cytokine production in mouse macrophages and human peripheral blood mononuclear cells (PBMCs); inhibits LPS-induced activation of MAPK and NF-kappa-B signaling pathways in mouse macrophages. The chain is Aedesin from Aedes aegypti (Yellowfever mosquito).